Here is a 245-residue protein sequence, read N- to C-terminus: MKFYSVKMRASLNDRHVSGGERITTEESIQKVVSELLTRPKEFDFVNIKIEKINNIKFIEKSLDIKTINVKNHKEGNEIALKLLEEVGIDREIAKAYIDLLHTGANPDRENMRGAMIITRSGKRVEKDRYRGVRTTNVDFLHREEVKKILLEKKYTERTLDALALSTKNLNHLDIIAEYCISDQPDYTTGYVAVNNTYYRINPLKEYSNPKGGRIYFVKDDTDIEELYKYLQEESFLIKEVGSLE.

The protein belongs to the BioW family. In terms of assembly, homodimer. The cofactor is Mg(2+).

The catalysed reaction is heptanedioate + ATP + CoA = 6-carboxyhexanoyl-CoA + AMP + diphosphate. It functions in the pathway metabolic intermediate metabolism; pimeloyl-CoA biosynthesis; pimeloyl-CoA from pimelate: step 1/1. Its function is as follows. Catalyzes the transformation of pimelate into pimeloyl-CoA with concomitant hydrolysis of ATP to AMP. This is 6-carboxyhexanoate--CoA ligase from Sulfurihydrogenibium sp. (strain YO3AOP1).